The sequence spans 393 residues: Prokineticin receptor 1 (393 aa).

Residues 1–62 (METTMGFMDD…TNSRTFFAAK (62 aa)) are Extracellular-facing. Residues N11, N14, and N36 are each glycosylated (N-linked (GlcNAc...) asparagine). A helical transmembrane segment spans residues 63–83 (IVIGMALVGIMLVCGIGNFIF). At 84-98 (IAALVRYKKLRNLTN) the chain is on the cytoplasmic side. The chain crosses the membrane as a helical span at residues 99–119 (LLIANLAISDFLVAIVCCPFE). The Extracellular portion of the chain corresponds to 120 to 146 (MDYYVVRQLSWEHGHVLCTSVNYLRTV). The cysteines at positions 137 and 217 are disulfide-linked. Residues 147–167 (SLYVSTNALLAIAIDRYLAIV) form a helical membrane-spanning segment. Topologically, residues 168 to 180 (HPLRPRMKCQTAT) are cytoplasmic. The helical transmembrane segment at 181–201 (GLIALVWTVSILIAIPSAYFT) threads the bilayer. The Extracellular portion of the chain corresponds to 202-232 (TETVLVIVKSQEKIFCGQIWPVDQQLYYKSY). Residues 233-253 (FLFIFGIEFVGPVVTMTLCYA) form a helical membrane-spanning segment. Over 254-282 (RISRELWFKAVPGFQTEQIRKRLRCRRKT) the chain is Cytoplasmic. Residues 283–303 (VLVLMCILTAYVLCWAPFYGF) traverse the membrane as a helical segment. Residues 304-322 (TIVRDFFPTVFVKEKHYLT) lie on the Extracellular side of the membrane. Residues 323 to 343 (AFYIVECIAMSNSMINTLCFV) traverse the membrane as a helical segment. The Cytoplasmic portion of the chain corresponds to 344–393 (TVKNDTVKYFKKIMLLHWKASYNGGKSSADLDLKTIGMPATEEVDCIRLK).

This sequence belongs to the G-protein coupled receptor 1 family. Localizes to glandular epithelium, stroma and vascular endothelial cells of first trimester decidua (at protein level). Up-regulated in first trimester decidua when compared with non-pregnant endometrium. Expressed in the stomach, throughout the small intestine, colon, rectum, thyroid gland, pituitary gland, salivary gland, adrenal gland, testis, ovary, brain, spleen, prostate and pancreas.

The protein localises to the cell membrane. Functionally, receptor for prokineticin 1. Exclusively coupled to the G(q) subclass of heteromeric G proteins. Activation leads to mobilization of calcium, stimulation of phosphoinositide turnover and activation of p44/p42 mitogen-activated protein kinase. May play a role during early pregnancy. The protein is Prokineticin receptor 1 (PROKR1) of Homo sapiens (Human).